Reading from the N-terminus, the 103-residue chain is Large ribosomal subunit protein uL24 (103 aa).

This sequence belongs to the universal ribosomal protein uL24 family. As to quaternary structure, part of the 50S ribosomal subunit.

Its function is as follows. One of two assembly initiator proteins, it binds directly to the 5'-end of the 23S rRNA, where it nucleates assembly of the 50S subunit. Functionally, one of the proteins that surrounds the polypeptide exit tunnel on the outside of the subunit. In Bacillus anthracis (strain A0248), this protein is Large ribosomal subunit protein uL24.